Reading from the N-terminus, the 950-residue chain is Glycine dehydrogenase (decarboxylating) (950 aa).

An N6-(pyridoxal phosphate)lysine modification is found at Lys-698.

It belongs to the GcvP family. In terms of assembly, the glycine cleavage system is composed of four proteins: P, T, L and H. It depends on pyridoxal 5'-phosphate as a cofactor.

The enzyme catalyses N(6)-[(R)-lipoyl]-L-lysyl-[glycine-cleavage complex H protein] + glycine + H(+) = N(6)-[(R)-S(8)-aminomethyldihydrolipoyl]-L-lysyl-[glycine-cleavage complex H protein] + CO2. The glycine cleavage system catalyzes the degradation of glycine. The P protein binds the alpha-amino group of glycine through its pyridoxal phosphate cofactor; CO(2) is released and the remaining methylamine moiety is then transferred to the lipoamide cofactor of the H protein. The protein is Glycine dehydrogenase (decarboxylating) of Neisseria gonorrhoeae (strain ATCC 700825 / FA 1090).